We begin with the raw amino-acid sequence, 511 residues long: ATP synthase subunit alpha (511 aa).

Residue 169-176 (GDRQTGKT) coordinates ATP.

It belongs to the ATPase alpha/beta chains family. As to quaternary structure, F-type ATPases have 2 components, CF(1) - the catalytic core - and CF(0) - the membrane proton channel. CF(1) has five subunits: alpha(3), beta(3), gamma(1), delta(1), epsilon(1). CF(0) has three main subunits: a(1), b(2) and c(9-12). The alpha and beta chains form an alternating ring which encloses part of the gamma chain. CF(1) is attached to CF(0) by a central stalk formed by the gamma and epsilon chains, while a peripheral stalk is formed by the delta and b chains.

It is found in the cell inner membrane. The catalysed reaction is ATP + H2O + 4 H(+)(in) = ADP + phosphate + 5 H(+)(out). Its function is as follows. Produces ATP from ADP in the presence of a proton gradient across the membrane. The alpha chain is a regulatory subunit. This chain is ATP synthase subunit alpha, found in Bartonella bacilliformis (strain ATCC 35685 / KC583 / Herrer 020/F12,63).